Reading from the N-terminus, the 397-residue chain is Succinyl-diaminopimelate desuccinylase (397 aa).

A Zn(2+)-binding site is contributed by histidine 74. Residue aspartate 76 is part of the active site. Zn(2+) is bound at residue aspartate 107. The active-site Proton acceptor is glutamate 141. Zn(2+) contacts are provided by glutamate 142, glutamate 170, and histidine 368.

This sequence belongs to the peptidase M20A family. DapE subfamily. As to quaternary structure, homodimer. Requires Zn(2+) as cofactor. It depends on Co(2+) as a cofactor.

The catalysed reaction is N-succinyl-(2S,6S)-2,6-diaminopimelate + H2O = (2S,6S)-2,6-diaminopimelate + succinate. It functions in the pathway amino-acid biosynthesis; L-lysine biosynthesis via DAP pathway; LL-2,6-diaminopimelate from (S)-tetrahydrodipicolinate (succinylase route): step 3/3. Functionally, catalyzes the hydrolysis of N-succinyl-L,L-diaminopimelic acid (SDAP), forming succinate and LL-2,6-diaminopimelate (DAP), an intermediate involved in the bacterial biosynthesis of lysine and meso-diaminopimelic acid, an essential component of bacterial cell walls. In Mesorhizobium japonicum (strain LMG 29417 / CECT 9101 / MAFF 303099) (Mesorhizobium loti (strain MAFF 303099)), this protein is Succinyl-diaminopimelate desuccinylase.